The primary structure comprises 403 residues: Acetate kinase (403 aa).

Asparagine 9 lines the Mg(2+) pocket. Lysine 16 is a binding site for ATP. Arginine 93 is a binding site for substrate. Aspartate 150 (proton donor/acceptor) is an active-site residue. Residues 210-214 (HLGNG), 284-286 (DFR), and 332-336 (GVGEN) each bind ATP. Glutamate 388 lines the Mg(2+) pocket.

This sequence belongs to the acetokinase family. Homodimer. The cofactor is Mg(2+). Mn(2+) serves as cofactor.

The protein resides in the cytoplasm. It catalyses the reaction acetate + ATP = acetyl phosphate + ADP. It functions in the pathway metabolic intermediate biosynthesis; acetyl-CoA biosynthesis; acetyl-CoA from acetate: step 1/2. In terms of biological role, catalyzes the formation of acetyl phosphate from acetate and ATP. Can also catalyze the reverse reaction. This is Acetate kinase from Corynebacterium jeikeium (strain K411).